A 350-amino-acid chain; its full sequence is Galactokinase (350 aa).

Substrate is bound at residue 15–18; sequence EHTD. ATP contacts are provided by residues serine 47 and 99–105; that span reads GAGLSSS. Positions 105 and 137 each coordinate Mg(2+). The active-site Proton acceptor is the aspartate 149. Tyrosine 198 provides a ligand contact to substrate.

The protein belongs to the GHMP kinase family. GalK subfamily.

It localises to the cytoplasm. The enzyme catalyses alpha-D-galactose + ATP = alpha-D-galactose 1-phosphate + ADP + H(+). The protein operates within carbohydrate metabolism; galactose metabolism. Functionally, catalyzes the transfer of the gamma-phosphate of ATP to D-galactose to form alpha-D-galactose-1-phosphate (Gal-1-P). The chain is Galactokinase from Pyrococcus horikoshii (strain ATCC 700860 / DSM 12428 / JCM 9974 / NBRC 100139 / OT-3).